Consider the following 314-residue polypeptide: ATP synthase gamma chain (314 aa).

Belongs to the ATPase gamma chain family. In terms of assembly, F-type ATPases have 2 components, CF(1) - the catalytic core - and CF(0) - the membrane proton channel. CF(1) has five subunits: alpha(3), beta(3), gamma(1), delta(1), epsilon(1). CF(0) has three main subunits: a, b and c.

Its subcellular location is the cellular thylakoid membrane. Functionally, produces ATP from ADP in the presence of a proton gradient across the membrane. The gamma chain is believed to be important in regulating ATPase activity and the flow of protons through the CF(0) complex. The chain is ATP synthase gamma chain from Synechococcus sp. (strain JA-2-3B'a(2-13)) (Cyanobacteria bacterium Yellowstone B-Prime).